Consider the following 619-residue polypeptide: Tyrosine-protein kinase ZAP-70 (619 aa).

One can recognise an SH2 1 domain in the interval 10–102; that stretch reads FFYGSISRAE…GLPCNLRKPC (93 aa). Residues 103–162 are interdomain A; the sequence is NRPSGLEPQPGVFDCLRDAMVRDYVRQTWKLEGEALEQAIISQAPQVEKLIATTAHERMP. The region spanning 163 to 254 is the SH2 2 domain; sequence WYHSSLTREE…GLIYCLKEAC (92 aa). A Phosphotyrosine modification is found at Tyr248. Residues 255 to 337 are interdomain B; the sequence is PNSSASNASG…KKLFLKRDNL (83 aa). Residues 260–309 are disordered; it reads SNASGAAAPTLPAHPSTLTHPQRRIDTLNSDGYTPEPARITSPDKPRPMP. Ser289 bears the Phosphoserine mark. Tyr292 bears the Phosphotyrosine mark. Tyr315 carries the post-translational modification Phosphotyrosine; by LCK. Tyr319 is modified (phosphotyrosine). In terms of domain architecture, Protein kinase spans 338 to 600; the sequence is LIADIELGCG…QRMRACYYSL (263 aa). ATP is bound by residues 345 to 352 and Lys369; that span reads GCGNFGSV. The Proton acceptor role is filled by Asp461. Residues Tyr492 and Tyr493 each carry the phosphotyrosine modification. Residue Lys544 forms a Glycyl lysine isopeptide (Lys-Gly) (interchain with G-Cter in ubiquitin) linkage. At Lys603 the chain carries N6-acetyllysine.

This sequence belongs to the protein kinase superfamily. Tyr protein kinase family. SYK/ZAP-70 subfamily. As to quaternary structure, interacts with CD247/CD3Z; this interaction docks ZAP70 at the stimulated TCR. Interacts with NFAM1. Interacts with adapter protein SLA; this interaction negatively regulates T-cell receptor signaling. Interacts with FCRL3. Interacts with VAV1. Interacts with CBL; this interaction promotes ubiquitination, internalization and subsequent degradation of CD247/CD3Z. Identified in a complex with CBL and UBE2L3. Interacts with SHB. Interacts with adapter protein SLA2; this interaction negatively regulates T-cell receptor signaling. Interacts with CBLB. Interacts (via SH2 domains) with RHOH; this interaction regulates ZAP70 subcellular localization. Interacts with DEF6. Interacts (ubiquitinated form) with OTUD7B and UBASH3B. In terms of processing, phosphorylated on tyrosine residues upon T-cell antigen receptor (TCR) stimulation. Phosphorylation of Tyr-315 and Tyr-319 are essential for ZAP70 positive function on T-lymphocyte activation whereas Tyr-292 has a negative regulatory role. Within the C-terminal kinase domain, Tyr-492 and Tyr-493 are phosphorylated after TCR induction, Tyr-492 playing a negative regulatory role and Tyr-493 a positive. Tyr-493 is dephosphorylated by PTN22. Ubiquitinated in response to T cell activation. Deubiquitinated by OTUD7B. In terms of tissue distribution, expressed in T- and natural killer cells. Also present in early thymocytes and pro/pre B-cells.

It localises to the cytoplasm. It is found in the cell membrane. It carries out the reaction L-tyrosyl-[protein] + ATP = O-phospho-L-tyrosyl-[protein] + ADP + H(+). With respect to regulation, activated by phosphorylation at Tyr-493 in the activation loop. Inhibited by staurosporine. Functionally, tyrosine kinase that plays an essential role in regulation of the adaptive immune response. Regulates motility, adhesion and cytokine expression of mature T-cells, as well as thymocyte development. Also contributes to the development and activation of primary B-lymphocytes. When antigen presenting cells (APC) activate T-cell receptor (TCR), a serie of phosphorylations lead to the recruitment of ZAP70 to the doubly phosphorylated TCR component CD247/CD3Z through ITAM motif at the plasma membrane. This recruitment serves to localization to the stimulated TCR and to relieve its autoinhibited conformation. Release of ZAP70 active conformation is further stabilized by phosphorylation mediated by LCK. Subsequently, ZAP70 phosphorylates at least 2 essential adapter proteins: LAT and LCP2. In turn, a large number of signaling molecules are recruited and ultimately lead to lymphokine production, T-cell proliferation and differentiation. Furthermore, ZAP70 controls cytoskeleton modifications, adhesion and mobility of T-lymphocytes, thus ensuring correct delivery of effectors to the APC. ZAP70 is also required for TCR-CD247/CD3Z internalization and degradation through interaction with the E3 ubiquitin-protein ligase CBL and adapter proteins SLA and SLA2. Thus, ZAP70 regulates both T-cell activation switch on and switch off by modulating TCR expression at the T-cell surface. During thymocyte development, ZAP70 promotes survival and cell-cycle progression of developing thymocytes before positive selection (when cells are still CD4/CD8 double negative). Additionally, ZAP70-dependent signaling pathway may also contribute to primary B-cells formation and activation through B-cell receptor (BCR). The chain is Tyrosine-protein kinase ZAP-70 (ZAP70) from Homo sapiens (Human).